Consider the following 768-residue polypeptide: ATP-dependent zinc metalloprotease FtsH (768 aa).

Residues 1 to 33 (MADRDKNDIRKRLEELRKDNNRRNNRQDNGNRS) lie on the Cytoplasmic side of the membrane. The chain crosses the membrane as a helical span at residues 34–54 (PFSGFLFFIFVILLFTFTLLF). Residues 55 to 139 (HRDIQTYFQE…KLNSLQPSGG (85 aa)) are Periplasmic-facing. A helical membrane pass occupies residues 140 to 160 (GFFLLLLGQFLPMIIMIGLMV). Residues 161 to 768 (YLAKKMVGGS…SNFKLPSFME (608 aa)) are Cytoplasmic-facing. Position 238 to 245 (238 to 245 (GRPGTGKT)) interacts with ATP. Zn(2+) is bound at residue H461. The active site involves E462. Residues H465 and D536 each coordinate Zn(2+). The disordered stretch occupies residues 647 to 768 (EESIQKGSEG…SNFKLPSFME (122 aa)). A compositionally biased stretch (basic and acidic residues) spans 669–698 (QENKTVEAEVHDSNLKSDTEKLAEAVREIT). Acidic residues predominate over residues 715 to 731 (KDSDDNEKNDDDNENSD).

It in the central section; belongs to the AAA ATPase family. In the C-terminal section; belongs to the peptidase M41 family. As to quaternary structure, homohexamer. The cofactor is Zn(2+).

It is found in the cell inner membrane. In terms of biological role, acts as a processive, ATP-dependent zinc metallopeptidase for both cytoplasmic and membrane proteins. Plays a role in the quality control of integral membrane proteins. The protein is ATP-dependent zinc metalloprotease FtsH of Leptotrichia buccalis (strain ATCC 14201 / DSM 1135 / JCM 12969 / NCTC 10249 / C-1013-b).